The primary structure comprises 309 residues: Homoserine kinase (309 aa).

91 to 101 (PVGSGLGSSAC) is a binding site for ATP.

The protein belongs to the GHMP kinase family. Homoserine kinase subfamily.

It localises to the cytoplasm. It carries out the reaction L-homoserine + ATP = O-phospho-L-homoserine + ADP + H(+). Its pathway is amino-acid biosynthesis; L-threonine biosynthesis; L-threonine from L-aspartate: step 4/5. In terms of biological role, catalyzes the ATP-dependent phosphorylation of L-homoserine to L-homoserine phosphate. This chain is Homoserine kinase, found in Hamiltonella defensa subsp. Acyrthosiphon pisum (strain 5AT).